We begin with the raw amino-acid sequence, 182 residues long: Alpha-S2-casein (182 aa).

The first 15 residues, 1–15 (MKFFIFTCLLAVALA), serve as a signal peptide directing secretion. Phosphoserine is present on residues Ser-22, Ser-23, and Ser-24.

The protein belongs to the alpha-casein family. As to expression, mammary gland specific. Secreted in milk.

The protein resides in the secreted. Important role in the capacity of milk to transport calcium phosphate. This is Alpha-S2-casein (CSN1S2) from Oryctolagus cuniculus (Rabbit).